Here is a 394-residue protein sequence, read N- to C-terminus: Elongation factor Tu (394 aa).

The region spanning 10 to 204 (KPHINIGTIG…AVDDNIPTPE (195 aa)) is the tr-type G domain. The G1 stretch occupies residues 19-26 (GHVDHGKT). Residue 19–26 (GHVDHGKT) participates in GTP binding. Threonine 26 is a Mg(2+) binding site. Residues 60–64 (GITIN) form a G2 region. The interval 81–84 (DCPG) is G3. GTP contacts are provided by residues 81–85 (DCPGH) and 136–139 (NKID). Residues 136–139 (NKID) are G4. The G5 stretch occupies residues 174–176 (SAL).

It belongs to the TRAFAC class translation factor GTPase superfamily. Classic translation factor GTPase family. EF-Tu/EF-1A subfamily. Monomer.

Its subcellular location is the cytoplasm. The catalysed reaction is GTP + H2O = GDP + phosphate + H(+). Its function is as follows. GTP hydrolase that promotes the GTP-dependent binding of aminoacyl-tRNA to the A-site of ribosomes during protein biosynthesis. The sequence is that of Elongation factor Tu from Chlamydia trachomatis serovar L2 (strain ATCC VR-902B / DSM 19102 / 434/Bu).